A 426-amino-acid polypeptide reads, in one-letter code: MANPVTEIDVDLNTQEVLLAASQHDTAKLRRLLRANDAAGNPANVKDPETGYSPLHAAIAACEPDEEEDVKSNGVQTNGDRQTHGQESTVEAAVQTVKLLLQEGAIWNDLDLNNETPGCIARRLGLTELYDMVVDAGVRAELLLNRLDGYEQLSDEEMEEDGEQEQEQQDAAVAADASITNTAEDESVPQLVDTTAAAPPQTADAEPSVTSSRYLNSDLTFQQDRLLDQDQNGVMMAWESDIMAKSAKQLLPTPGLRVLNVGHGMGIVDGFIQEQSPSAHHIIEAHPAVVAEMKRKGWHEKPGVVIHEGKWQDILPGLVAEGVMFDAIYYDTFAESYADFREFFTEQVIGVLEQEGKWSFFNGMGADRQISYDVYQKVVEMDLFEAGFDVEWEEIDVPKLEGEWNGVRRPYWSIDKYRLPLCKYMD.

Disordered stretches follow at residues 65–88 and 155–175; these read DEEE…GQES and DEEM…AVAA. The segment covering 73-88 has biased composition (polar residues); sequence NGVQTNGDRQTHGQES. Over residues 155–168 the composition is skewed to acidic residues; sequence DEEMEEDGEQEQEQ. The region spanning 207–426 is the RMT2 domain; that stretch reads PSVTSSRYLN…YRLPLCKYMD (220 aa). Residues Tyr214, Met243, 263 to 268, 284 to 286, 311 to 312, and Asp331 each bind S-adenosyl-L-methionine; these read HGMGIV, EAH, and WQ.

Belongs to the class I-like SAM-binding methyltransferase superfamily. RMT2 methyltransferase family. Monomer.

The protein resides in the cytoplasm. It localises to the nucleus. Its function is as follows. S-adenosyl-L-methionine-dependent protein-arginine N-methyltransferase that methylates the delta-nitrogen atom of arginine residues to form N5-methylarginine (type IV) in target proteins. Monomethylates ribosomal protein L12. In Emericella nidulans (strain FGSC A4 / ATCC 38163 / CBS 112.46 / NRRL 194 / M139) (Aspergillus nidulans), this protein is Protein arginine N-methyltransferase 2.